The sequence spans 1209 residues: DNA-directed RNA polymerase subunit beta'' (1209 aa).

The Zn(2+) site is built by cysteine 233, cysteine 308, cysteine 315, and cysteine 318.

It belongs to the RNA polymerase beta' chain family. RpoC2 subfamily. In plastids the minimal PEP RNA polymerase catalytic core is composed of four subunits: alpha, beta, beta', and beta''. When a (nuclear-encoded) sigma factor is associated with the core the holoenzyme is formed, which can initiate transcription. It depends on Zn(2+) as a cofactor.

The protein localises to the plastid. It localises to the chloroplast. The catalysed reaction is RNA(n) + a ribonucleoside 5'-triphosphate = RNA(n+1) + diphosphate. In terms of biological role, DNA-dependent RNA polymerase catalyzes the transcription of DNA into RNA using the four ribonucleoside triphosphates as substrates. This Pinus koraiensis (Korean pine) protein is DNA-directed RNA polymerase subunit beta''.